A 355-amino-acid polypeptide reads, in one-letter code: uncharacterized protein (355 aa).

Belongs to the 3-beta-HSD family.

This is an uncharacterized protein from Frog virus 3 (isolate Goorha) (FV-3).